Here is a 369-residue protein sequence, read N- to C-terminus: Phosphate-binding protein PstS 3 (369 aa).

The N-terminal stretch at 1 to 21 is a signal peptide; that stretch reads MKLNQFGAAIGLLATGALLSG. The N-palmitoyl cysteine moiety is linked to residue Cys22. A lipid anchor (S-diacylglycerol cysteine) is attached at Cys22. Residues 55–57, Ser85, Asp103, and 190–192 contribute to the phosphate site; these read STA and SGT.

Belongs to the PstS family. As to quaternary structure, the complex is composed of two ATP-binding proteins (PstB), two transmembrane proteins (PstC and PstA) and a solute-binding protein (PstS).

The protein localises to the cell membrane. Part of the ABC transporter complex PstSACB involved in phosphate import. The polypeptide is Phosphate-binding protein PstS 3 (pstS2) (Mycobacterium leprae (strain TN)).